The following is a 219-amino-acid chain: Large ribosomal subunit protein eL13 (219 aa).

The disordered stretch occupies residues 198–219; it reads KDAAENPDDVTKAPTAVKRNKT.

It belongs to the eukaryotic ribosomal protein eL13 family. In terms of assembly, component of the 60S large ribosomal subunit (LSU).

The protein localises to the cytoplasm. Functionally, component of the ribosome, a large ribonucleoprotein complex responsible for the synthesis of proteins in the cell. The small ribosomal subunit (SSU) binds messenger RNAs (mRNAs) and translates the encoded message by selecting cognate aminoacyl-transfer RNA (tRNA) molecules. The large subunit (LSU) contains the ribosomal catalytic site termed the peptidyl transferase center (PTC), which catalyzes the formation of peptide bonds, thereby polymerizing the amino acids delivered by tRNAs into a polypeptide chain. The nascent polypeptides leave the ribosome through a tunnel in the LSU and interact with protein factors that function in enzymatic processing, targeting, and the membrane insertion of nascent chains at the exit of the ribosomal tunnel. As part of the LSU, it is probably required for its formation and the maturation of rRNAs. The protein is Large ribosomal subunit protein eL13 (RpL13) of Spodoptera frugiperda (Fall armyworm).